The sequence spans 837 residues: Protein translocase subunit SecA (837 aa).

Residues Q85, 103–107, and D493 each bind ATP; that span reads GEGKT. Positions 821, 823, 832, and 833 each coordinate Zn(2+).

Belongs to the SecA family. Monomer and homodimer. Part of the essential Sec protein translocation apparatus which comprises SecA, SecYEG and auxiliary proteins SecDF. Other proteins may also be involved. Zn(2+) serves as cofactor.

It localises to the cell membrane. The protein localises to the cytoplasm. The catalysed reaction is ATP + H2O + cellular proteinSide 1 = ADP + phosphate + cellular proteinSide 2.. Functionally, part of the Sec protein translocase complex. Interacts with the SecYEG preprotein conducting channel. Has a central role in coupling the hydrolysis of ATP to the transfer of proteins into and across the cell membrane, serving as an ATP-driven molecular motor driving the stepwise translocation of polypeptide chains across the membrane. In Streptococcus pneumoniae serotype 19F (strain G54), this protein is Protein translocase subunit SecA.